We begin with the raw amino-acid sequence, 186 residues long: Elongation factor P (186 aa).

Belongs to the elongation factor P family.

The protein localises to the cytoplasm. It participates in protein biosynthesis; polypeptide chain elongation. Involved in peptide bond synthesis. Stimulates efficient translation and peptide-bond synthesis on native or reconstituted 70S ribosomes in vitro. Probably functions indirectly by altering the affinity of the ribosome for aminoacyl-tRNA, thus increasing their reactivity as acceptors for peptidyl transferase. In Streptococcus sanguinis (strain SK36), this protein is Elongation factor P.